A 232-amino-acid chain; its full sequence is Large ribosomal subunit protein uL1 (232 aa).

It belongs to the universal ribosomal protein uL1 family. Part of the 50S ribosomal subunit.

Functionally, binds directly to 23S rRNA. The L1 stalk is quite mobile in the ribosome, and is involved in E site tRNA release. Its function is as follows. Protein L1 is also a translational repressor protein, it controls the translation of the L11 operon by binding to its mRNA. This Stenotrophomonas maltophilia (strain R551-3) protein is Large ribosomal subunit protein uL1.